The primary structure comprises 384 residues: PqqA peptide cyclase (384 aa).

A Radical SAM core domain is found at 5–220 (VGLPLWLLAE…TNEYREKLKA (216 aa)). The [4Fe-4S] cluster site is built by Cys-19, Cys-23, and Cys-26.

This sequence belongs to the radical SAM superfamily. PqqE family. In terms of assembly, interacts with PqqD. The interaction is necessary for activity of PqqE. [4Fe-4S] cluster serves as cofactor.

It catalyses the reaction [PQQ precursor protein] + S-adenosyl-L-methionine = E-Y cross-linked-[PQQ precursor protein] + 5'-deoxyadenosine + L-methionine + H(+). Its pathway is cofactor biosynthesis; pyrroloquinoline quinone biosynthesis. Its function is as follows. Catalyzes the cross-linking of a glutamate residue and a tyrosine residue in the PqqA protein as part of the biosynthesis of pyrroloquinoline quinone (PQQ). The sequence is that of PqqA peptide cyclase from Acinetobacter baumannii (strain ACICU).